An 871-amino-acid chain; its full sequence is Alanine--tRNA ligase (871 aa).

The Zn(2+) site is built by His559, His563, Cys661, and His665.

It belongs to the class-II aminoacyl-tRNA synthetase family. It depends on Zn(2+) as a cofactor.

It localises to the cytoplasm. It carries out the reaction tRNA(Ala) + L-alanine + ATP = L-alanyl-tRNA(Ala) + AMP + diphosphate. Its function is as follows. Catalyzes the attachment of alanine to tRNA(Ala) in a two-step reaction: alanine is first activated by ATP to form Ala-AMP and then transferred to the acceptor end of tRNA(Ala). Also edits incorrectly charged Ser-tRNA(Ala) and Gly-tRNA(Ala) via its editing domain. In Aquifex pyrophilus, this protein is Alanine--tRNA ligase.